Here is a 404-residue protein sequence, read N- to C-terminus: G-protein coupled receptor 182 (404 aa).

The Extracellular portion of the chain corresponds to 1 to 57 (MSVKPSWGPGPSEGVTAVPTSDLGEIHNWTELLDLFNHTLSECHVELSQSTKRVVLF). 2 N-linked (GlcNAc...) asparagine glycosylation sites follow: N28 and N37. Residues 58-79 (ALYLAMFVVGLVENLLVICVNW) form a helical membrane-spanning segment. Residues 80–90 (RGSGRAGLMNL) lie on the Cytoplasmic side of the membrane. Residues 91 to 113 (YILNMAIADLGIVLSLPVWMLEV) traverse the membrane as a helical segment. The Extracellular segment spans residues 114-127 (TLDYTWLWGSFSCR). A disulfide bridge links C126 with C202. The helical transmembrane segment at 128–149 (FTHYFYFVNMYSSIFFLVCLSV) threads the bilayer. The Cytoplasmic segment spans residues 150-170 (DRYVTLTSASPSWQRYQHRVR). A helical transmembrane segment spans residues 171 to 193 (RAMCAGIWVLSAIIPLPEVVHIQ). At 194–217 (LVEGPEPMCLFMAPFETYSTWALA) the chain is on the extracellular side. Residues 218–239 (VALSTTILGFLLPFPLITVFNV) traverse the membrane as a helical segment. The Cytoplasmic portion of the chain corresponds to 240 to 258 (LTACRLRQPGQPKSRRHCL). Residues 259–280 (LLCAYVAVFVMCWLPYHVTLLL) form a helical membrane-spanning segment. Residues 281–299 (LTLHGTHISLHCHLVHLLY) lie on the Extracellular side of the membrane. A helical transmembrane segment spans residues 300-320 (FFYDVIDCFSMLHCVINPILY). The Cytoplasmic portion of the chain corresponds to 321–404 (NFLSPHFRGR…ISPTQPLTPS (84 aa)).

Belongs to the G-protein coupled receptor 1 family. As to expression, highly expressed in heart, skeletal muscle, immune system, adrenal gland and liver.

The protein resides in the cell membrane. In terms of biological role, orphan receptor. This is G-protein coupled receptor 182 (GPR182) from Homo sapiens (Human).